The primary structure comprises 364 residues: Long-wave-sensitive opsin 1 (364 aa).

Residues 1–52 are Extracellular-facing; the sequence is MAHAWGPQRLAGGQPQANFEESTQGSIFTYTNSNSTRDPFEGPNYHIAPRWV. O-linked (GlcNAc) serine glycosylation occurs at Ser-22. Asn-34 carries an N-linked (GlcNAc...) asparagine glycan. Residues 53–77 traverse the membrane as a helical segment; that stretch reads YHLTSAWMVFVVIASVFTNGLVLAA. The Cytoplasmic portion of the chain corresponds to 78–89; sequence TMRFKKLRHPLN. The chain crosses the membrane as a helical span at residues 90 to 115; it reads WILVNLAIADLAETIIASTISVVNQM. The Extracellular portion of the chain corresponds to 116–129; that stretch reads YGYFVLGHPLCVVE. A disulfide bridge connects residues Cys-126 and Cys-203. The helical transmembrane segment at 130 to 149 threads the bilayer; the sequence is GYTVSLCGITGLWSLAIISW. The Cytoplasmic segment spans residues 150-168; it reads ERWMVVCKPFGNVRFDAKL. A helical membrane pass occupies residues 169–192; the sequence is AITGIAFSWIWAAVWTAPPIFGWS. Residues 193-218 are Extracellular-facing; it reads RYWPHGLKTSCGPDVFSGSSYPGVQS. Residues 219 to 246 form a helical membrane-spanning segment; the sequence is YMIVLMITCCFIPLSVIILCYLQVWLAI. Residues 247-268 lie on the Cytoplasmic side of the membrane; that stretch reads RAVAKQQKESESTQKAEKEVTR. A helical membrane pass occupies residues 269–292; the sequence is MVMVMIFAYCLCWGPYTFFACFAA. The Extracellular portion of the chain corresponds to 293-300; that stretch reads AHPGYAFH. Residues 301-325 form a helical membrane-spanning segment; it reads PLVAALPAYFAKSATIYNPIIYVFM. Lys-312 is subject to N6-(retinylidene)lysine. Topologically, residues 326–364 are cytoplasmic; it reads NRQFRNCILQLFGKKVDDSSELSSVSKTEASSVSSVSPA.

The protein belongs to the G-protein coupled receptor 1 family. Opsin subfamily. Phosphorylated on some or all of the serine and threonine residues present in the C-terminal region. In terms of tissue distribution, expressed in retina (at protein level). Expressed in cone and/or rod photoreceptor cells (at protein level).

The protein localises to the membrane. Its function is as follows. Visual pigments are the light-absorbing molecules that mediate vision. They consist of an apoprotein, opsin, covalently linked to cis-retinal. The polypeptide is Long-wave-sensitive opsin 1 (OPN1LW) (Bos taurus (Bovine)).